The chain runs to 490 residues: Sphingomyelinase (490 aa).

A signal peptide spans 1–31 (MDYAKRIGQVGALAVVLGVGAAVTTHAIGSA). Residues 30–49 (SAAPTDPSSSSTDSPVDACS) are disordered. At 32 to 136 (APTDPSSSST…FDACDPDGNR (105 aa)) the chain is on the periplasmic side. Residues 137-145 (MTFAVRERG) form a beta stranded membrane-spanning segment. Residues 146 to 161 (APGGPQHGIVTVDQRT) are Extracellular-facing. A beta stranded membrane pass occupies residues 162–168 (ASFIYTA). Topologically, residues 169 to 171 (DPG) are periplasmic. A beta stranded membrane pass occupies residues 172–182 (FVGTDTFSVNV). Residues 183–187 (SDDTS) lie on the Extracellular side of the membrane. Residues 188–196 (LHVHGLAGY) traverse the membrane as a beta stranded segment. Topologically, residues 197–204 (LGPFHGHD) are periplasmic. A beta stranded transmembrane segment spans residues 205–213 (DVATVTVFV). At 214–490 (GNTPTDTISG…HYVADNVAVR (277 aa)) the chain is on the extracellular side.

It belongs to the SpmT family.

It is found in the cell outer membrane. The catalysed reaction is a sphingomyelin + H2O = phosphocholine + an N-acylsphing-4-enine + H(+). Its function is as follows. Catalyzes the cleavage of sphingomyelin, a major lipid in eukaryotic cells, into ceramide and phosphocholine, which are then utilized by M.bovis as carbon, nitrogen and phosphorus sources, respectively. Thus, enables M.bovis to utilize sphingomyelin as a source of several essential nutrients for intracellular growth during infection. Furthermore, lyses erythrocytes and constitutes a hemolytic factor. The protein is Sphingomyelinase of Mycobacterium bovis (strain ATCC BAA-935 / AF2122/97).